We begin with the raw amino-acid sequence, 228 residues long: Uracil-DNA glycosylase (228 aa).

The active-site Proton acceptor is aspartate 64.

Belongs to the uracil-DNA glycosylase (UDG) superfamily. UNG family.

It is found in the cytoplasm. The enzyme catalyses Hydrolyzes single-stranded DNA or mismatched double-stranded DNA and polynucleotides, releasing free uracil.. Functionally, excises uracil residues from the DNA which can arise as a result of misincorporation of dUMP residues by DNA polymerase or due to deamination of cytosine. The sequence is that of Uracil-DNA glycosylase from Yersinia pseudotuberculosis serotype O:1b (strain IP 31758).